The chain runs to 550 residues: Probable endochitinase (550 aa).

An N-terminal signal peptide occupies residues 1–16 (MLHYLATILWLAVAHA). N-linked (GlcNAc...) asparagine; by host glycosylation is found at N146 and N172. Residues 147–547 (KTVAAYFVEW…NAMNERVRVK (401 aa)) enclose the GH18 domain. E304 acts as the Proton donor in catalysis. N-linked (GlcNAc...) asparagine; by host glycosylation is present at N344. A Prevents secretion from ER motif is present at residues 547 to 550 (KDEL).

This sequence belongs to the glycosyl hydrolase 18 family. Chitinase class II subfamily.

Its subcellular location is the host endoplasmic reticulum lumen. It carries out the reaction Random endo-hydrolysis of N-acetyl-beta-D-glucosaminide (1-&gt;4)-beta-linkages in chitin and chitodextrins.. The protein is Probable endochitinase of Orgyia pseudotsugata (Douglas-fir tussock moth).